The sequence spans 427 residues: MKVTKETLEKSRVELTIEVEAEEVSKAYEKAYKKIAQKVVIPGFRKGKAPRVLVERHVGKEYILEEALDELLPESYVKAVNEAGIEPVDKPEVSLVSYGVNEPLVYKAVVDVKPEVELGQYTGLEVTKMPVEVTDEEVEKELEYLQNRYAKLITVEDGEAKFGDIVVIDFAGKMNGEPLEGGSADNYRLELGSKVFIPGFEEQIVGMKPGETKEINVTFPEDYQKEDLAGKPAVFTVTLKEIKRKELAPLDDEFAKDVSEFSTLAELKEDLKKKIAQTKENISREKMEAEVVEKAVDNANVEIPASMVNHEVEHILHHFEEELKYRRLTLEQYLNYQKKTLDELKEELKPRAERNVKTELVLEAIAKKEGITATDEEIDKELGKIAELYQQPVEEIKKLFAQRMDDLAYSIVRRKTIDFLVENAKAV.

Residues 163–248 (GDIVVIDFAG…LKEIKRKELA (86 aa)) enclose the PPIase FKBP-type domain.

This sequence belongs to the FKBP-type PPIase family. Tig subfamily.

It localises to the cytoplasm. The enzyme catalyses [protein]-peptidylproline (omega=180) = [protein]-peptidylproline (omega=0). Its function is as follows. Involved in protein export. Acts as a chaperone by maintaining the newly synthesized protein in an open conformation. Functions as a peptidyl-prolyl cis-trans isomerase. The protein is Trigger factor of Carboxydothermus hydrogenoformans (strain ATCC BAA-161 / DSM 6008 / Z-2901).